The following is a 72-amino-acid chain: Mitotic-spindle organizing protein 1 (72 aa).

Belongs to the MOZART1 family. In terms of assembly, part of the gamma-tubulin complex.

The protein localises to the cytoplasm. The protein resides in the cytoskeleton. It localises to the microtubule organizing center. It is found in the spindle pole body. In terms of biological role, required for gamma-tubulin complex recruitment to the microtubule organizing center (MTOC). The chain is Mitotic-spindle organizing protein 1 from Cryptococcus neoformans var. neoformans serotype D (strain B-3501A) (Filobasidiella neoformans).